The following is an 854-amino-acid chain: Protein translocase subunit SecA (854 aa).

ATP-binding positions include glutamine 89, 107–111 (GEGKT), and aspartate 501.

It belongs to the SecA family. As to quaternary structure, monomer and homodimer. Part of the essential Sec protein translocation apparatus which comprises SecA, SecYEG and auxiliary proteins SecDF-YajC and YidC.

Its subcellular location is the cell inner membrane. It is found in the cytoplasm. The catalysed reaction is ATP + H2O + cellular proteinSide 1 = ADP + phosphate + cellular proteinSide 2.. In terms of biological role, part of the Sec protein translocase complex. Interacts with the SecYEG preprotein conducting channel. Has a central role in coupling the hydrolysis of ATP to the transfer of proteins into and across the cell membrane, serving both as a receptor for the preprotein-SecB complex and as an ATP-driven molecular motor driving the stepwise translocation of polypeptide chains across the membrane. The sequence is that of Protein translocase subunit SecA from Pelagibacter ubique (strain HTCC1062).